Reading from the N-terminus, the 96-residue chain is Seed trypsin/chymotrypsin inhibitor IVA (96 aa).

Positions 1–10 (LSFAANVVNA) are cleaved as a signal peptide. Positions 11-24 (RFDSTSFITQVLSN) are excised as a propeptide. 7 disulfides stabilise this stretch: C32-C85, C33-C48, C36-C81, C38-C46, C55-C62, C59-C74, and C64-C72. The propeptide at 88 to 96 (SEVEEVIKN) is removed in PSTI I.

This sequence belongs to the Bowman-Birk serine protease inhibitor family. As to expression, seed.

In terms of biological role, inhibitor of trypsin and of chymotrypsin. May function as a natural phytochemical defense against predators. The sequence is that of Seed trypsin/chymotrypsin inhibitor IVA (TI1236) from Pisum sativum (Garden pea).